The sequence spans 453 residues: Bifunctional protein GlmU (453 aa).

The pyrophosphorylase stretch occupies residues 1–227 (MNKLSVVILA…LMEVEGVNNR (227 aa)). UDP-N-acetyl-alpha-D-glucosamine-binding positions include 9–12 (LAAG), lysine 23, glutamine 74, 79–80 (GT), 101–103 (YGD), glycine 138, glutamate 152, asparagine 167, and asparagine 225. Aspartate 103 is a binding site for Mg(2+). Mg(2+) is bound at residue asparagine 225. The linker stretch occupies residues 228-248 (LQLANLERHYQRKQVEKLLLA). An N-acetyltransferase region spans residues 249 to 453 (GVTFADPARF…ISNWQRPKRK (205 aa)). Residues arginine 331 and lysine 349 each coordinate UDP-N-acetyl-alpha-D-glucosamine. Histidine 361 acts as the Proton acceptor in catalysis. The UDP-N-acetyl-alpha-D-glucosamine site is built by tyrosine 364 and asparagine 375. Acetyl-CoA-binding positions include alanine 378, 384–385 (NY), serine 403, alanine 421, and arginine 438.

This sequence in the N-terminal section; belongs to the N-acetylglucosamine-1-phosphate uridyltransferase family. It in the C-terminal section; belongs to the transferase hexapeptide repeat family. In terms of assembly, homotrimer. It depends on Mg(2+) as a cofactor.

The protein localises to the cytoplasm. It carries out the reaction alpha-D-glucosamine 1-phosphate + acetyl-CoA = N-acetyl-alpha-D-glucosamine 1-phosphate + CoA + H(+). The enzyme catalyses N-acetyl-alpha-D-glucosamine 1-phosphate + UTP + H(+) = UDP-N-acetyl-alpha-D-glucosamine + diphosphate. It functions in the pathway nucleotide-sugar biosynthesis; UDP-N-acetyl-alpha-D-glucosamine biosynthesis; N-acetyl-alpha-D-glucosamine 1-phosphate from alpha-D-glucosamine 6-phosphate (route II): step 2/2. It participates in nucleotide-sugar biosynthesis; UDP-N-acetyl-alpha-D-glucosamine biosynthesis; UDP-N-acetyl-alpha-D-glucosamine from N-acetyl-alpha-D-glucosamine 1-phosphate: step 1/1. The protein operates within bacterial outer membrane biogenesis; LPS lipid A biosynthesis. In terms of biological role, catalyzes the last two sequential reactions in the de novo biosynthetic pathway for UDP-N-acetylglucosamine (UDP-GlcNAc). The C-terminal domain catalyzes the transfer of acetyl group from acetyl coenzyme A to glucosamine-1-phosphate (GlcN-1-P) to produce N-acetylglucosamine-1-phosphate (GlcNAc-1-P), which is converted into UDP-GlcNAc by the transfer of uridine 5-monophosphate (from uridine 5-triphosphate), a reaction catalyzed by the N-terminal domain. This is Bifunctional protein GlmU from Histophilus somni (strain 2336) (Haemophilus somnus).